Consider the following 403-residue polypeptide: GTPase Obg (403 aa).

One can recognise an Obg domain in the interval 1–159 (MKFIDESLIR…RDLLLELMLL (159 aa)). The OBG-type G domain occupies 160–333 (ADVGMLGFPN…LCRDIMDFII (174 aa)). GTP-binding positions include 166–173 (GFPNAGKS), 191–195 (FTTLV), 213–216 (DIPG), 283–286 (NKID), and 314–316 (SAA). 2 residues coordinate Mg(2+): Ser-173 and Thr-193. Positions 363 to 403 (EYQFDDDEDWDDDWTEEDDDEDWDDDWTEEDDEGIEFIYKP) are disordered. Over residues 365–397 (QFDDDEDWDDDWTEEDDDEDWDDDWTEEDDEGI) the composition is skewed to acidic residues.

The protein belongs to the TRAFAC class OBG-HflX-like GTPase superfamily. OBG GTPase family. In terms of assembly, monomer. Mg(2+) serves as cofactor.

It is found in the cytoplasm. Its function is as follows. An essential GTPase which binds GTP, GDP and possibly (p)ppGpp with moderate affinity, with high nucleotide exchange rates and a fairly low GTP hydrolysis rate. Plays a role in control of the cell cycle, stress response, ribosome biogenesis and in those bacteria that undergo differentiation, in morphogenesis control. The protein is GTPase Obg of Haemophilus influenzae (strain PittEE).